The primary structure comprises 441 residues: Proline--tRNA ligase (441 aa).

It belongs to the class-II aminoacyl-tRNA synthetase family. ProS type 2 subfamily. In terms of assembly, homodimer.

The protein localises to the cytoplasm. The catalysed reaction is tRNA(Pro) + L-proline + ATP = L-prolyl-tRNA(Pro) + AMP + diphosphate. Its function is as follows. Catalyzes the attachment of proline to tRNA(Pro) in a two-step reaction: proline is first activated by ATP to form Pro-AMP and then transferred to the acceptor end of tRNA(Pro). This chain is Proline--tRNA ligase, found in Methylobacterium radiotolerans (strain ATCC 27329 / DSM 1819 / JCM 2831 / NBRC 15690 / NCIMB 10815 / 0-1).